The following is a 377-amino-acid chain: Membrane progestin receptor epsilon (377 aa).

The tract at residues 1 to 40 (MPRRLQPRGAGTKGPPAPAPAASGAARNSHSAASRDPPAS) is disordered. Residues 1 to 86 (MPRRLQPRGA…VLKPTNETLN (86 aa)) are Cytoplasmic-facing. The segment covering 9-26 (GAGTKGPPAPAPAASGAA) has biased composition (low complexity). A helical membrane pass occupies residues 87-107 (FWTHFIPLLLFLSKFCRLFFL). The Extracellular portion of the chain corresponds to 108–116 (SGGDVPFHH). A helical membrane pass occupies residues 117–137 (PWLLPLWCYASGVLLTFAMSC). Topologically, residues 138–162 (TAHVFSCLSLRLRAAFFYLDYASIS) are cytoplasmic. The helical transmembrane segment at 163–183 (YYGFGSTVAYYYYLLPGLSLL) threads the bilayer. Residues 184–205 (DARVMTPYLQQRLGWHVDCTRL) lie on the Extracellular side of the membrane. The helical transmembrane segment at 206–226 (IAAYRALVLPVAFVLAVACTV) threads the bilayer. Over 227 to 243 (ACCKSRTDWCTYPFALR) the chain is Cytoplasmic. Residues 244 to 264 (TFVFVMPLSMACPIMLESWLF) traverse the membrane as a helical segment. The Extracellular portion of the chain corresponds to 265–301 (DLRGENPTLFVHFYRRYFWLVVAAFFNVSKIPERIQP). Residues 302-322 (GLFDIIGHSHQLFHIFTFLSI) form a helical membrane-spanning segment. Residues 323 to 343 (YDQVYYVEEGLRQFLQAPPAA) lie on the Cytoplasmic side of the membrane. Residues 344–364 (PTFSGTVGYMLLLVVCLGLVI) traverse the membrane as a helical segment. The Extracellular portion of the chain corresponds to 365-377 (RKFLNSSEFCSKK).

This sequence belongs to the ADIPOR family. In terms of assembly, homodimer. Expression levels vary widely in a range of tissues. Expressed in the brain, at high level in the pituitary gland and also in hypothalamus, limbic system, caudate nucleus accumens, pons and olfactory bulb.

It is found in the cell membrane. Its function is as follows. Plasma membrane progesterone (P4) receptor coupled to G proteins. Seems to act through a G(s) mediated pathway. May be involved in regulating rapid P4 signaling in the nervous system. Also binds dehydroepiandrosterone (DHEA), pregnanolone, pregnenolone and allopregnanolone. The polypeptide is Membrane progestin receptor epsilon (Homo sapiens (Human)).